The following is a 546-amino-acid chain: U3 small nucleolar RNA-associated protein 18 homolog (546 aa).

3 disordered regions span residues 1–55, 94–118, and 177–205; these read MSLS…LEES, SAVR…EENG, and NPGT…DGGV. Residues 13 to 23 are compositionally biased toward basic and acidic residues; sequence IKREELKKQYE. Over residues 24–35 the composition is skewed to acidic residues; that stretch reads DVEDEEEIGSDD. Phosphoserine is present on Ser33. Positions 45 to 55 are enriched in basic and acidic residues; sequence TEKEKQKLEES. Composition is skewed to acidic residues over residues 101 to 117 and 193 to 205; these read DYED…DEEN and ESSD…DGGV. WD repeat units follow at residues 242-281, 372-411, 413-454, and 509-545; these read PSNG…NTKI, KMNG…CLYK, VDEG…GGKR, and STMH…HYQN. Residues 389 to 404 carry the DWD box motif; the sequence is LLSSGGDGQVYVWDLR.

This sequence belongs to the WD repeat UTP18 family.

The protein resides in the nucleus. It localises to the nucleolus. In terms of biological role, involved in nucleolar processing of pre-18S ribosomal RNA. In Arabidopsis thaliana (Mouse-ear cress), this protein is U3 small nucleolar RNA-associated protein 18 homolog.